Here is a 113-residue protein sequence, read N- to C-terminus: ATP-dependent Clp protease adapter protein ClpS (113 aa).

It belongs to the ClpS family. In terms of assembly, binds to the N-terminal domain of the chaperone ClpA.

Functionally, involved in the modulation of the specificity of the ClpAP-mediated ATP-dependent protein degradation. The polypeptide is ATP-dependent Clp protease adapter protein ClpS (Leptospira biflexa serovar Patoc (strain Patoc 1 / Ames)).